A 291-amino-acid chain; its full sequence is Pantothenate synthetase (291 aa).

An ATP-binding site is contributed by 30-37 (MGYLHVGH). Residue H37 is the Proton donor of the active site. Position 61 (Q61) interacts with (R)-pantoate. Q61 is a beta-alanine binding site. 147 to 150 (GEKD) lines the ATP pocket. Q153 serves as a coordination point for (R)-pantoate. ATP-binding positions include V176 and 184–187 (CSSR).

It belongs to the pantothenate synthetase family. As to quaternary structure, homodimer.

The protein resides in the cytoplasm. The enzyme catalyses (R)-pantoate + beta-alanine + ATP = (R)-pantothenate + AMP + diphosphate + H(+). It participates in cofactor biosynthesis; (R)-pantothenate biosynthesis; (R)-pantothenate from (R)-pantoate and beta-alanine: step 1/1. In terms of biological role, catalyzes the condensation of pantoate with beta-alanine in an ATP-dependent reaction via a pantoyl-adenylate intermediate. This is Pantothenate synthetase from Rhizobium meliloti (strain 1021) (Ensifer meliloti).